Consider the following 99-residue polypeptide: Large ribosomal subunit protein bL28 (99 aa).

This sequence belongs to the bacterial ribosomal protein bL28 family.

The chain is Large ribosomal subunit protein bL28 from Rhizobium leguminosarum bv. trifolii (strain WSM2304).